Here is a 1441-residue protein sequence, read N- to C-terminus: Lysophospholipase NTE1 (1441 aa).

Over 1 to 22 (MWLTSYVLPRLKNILLLQFHIT) the chain is Lumenal. Residues 23-43 (LPLNYLVLLLLSTVIITYLFL) traverse the membrane as a helical segment. Over 44-1441 (RTRILSNYSQ…ENMLQRRNSI (1398 aa)) the chain is Cytoplasmic. Disordered regions lie at residues 154-173 (SNPS…PSND), 210-236 (THLN…TGEI), 376-445 (QDDT…NSSS), and 551-585 (NRTG…HFRN). Residues 376-388 (QDDTGSSASTIQK) show a composition bias toward polar residues. Residues 572 to 585 (SRTDRSESFDHFRN) show a composition bias toward basic and acidic residues. Residues 592–718 (NQFS…LTNS) and 707–836 (IYLK…VAKK) contribute to the a nucleoside 3',5'-cyclic phosphate site. A PNPLA domain is found at 1137-1301 (LVLGGGGARG…VDNLPVTEMT (165 aa)). Positions 1141-1146 (GGGARG) match the GXGXXG motif. A GXSXG motif is present at residues 1168–1172 (GTSIG). The active-site Nucleophile is S1170. Catalysis depends on D1288, which acts as the Proton acceptor. The DGA/G motif lies at 1288–1290 (DGG).

It belongs to the NTE family.

The protein resides in the endoplasmic reticulum membrane. It catalyses the reaction a 1-acyl-sn-glycero-3-phosphocholine + H2O = sn-glycerol 3-phosphocholine + a fatty acid + H(+). With respect to regulation, inhibited by organophosphorus esters. Functionally, intracellular phospholipase B that catalyzes the double deacylation of phosphatidylcholine (PC) to glycerophosphocholine (GroPCho). Plays an important role in membrane lipid homeostasis. Responsible for the rapid PC turnover in response to inositol, elevated temperatures, or when choline is present in the growth medium. This chain is Lysophospholipase NTE1 (NTE1), found in Kluyveromyces lactis (strain ATCC 8585 / CBS 2359 / DSM 70799 / NBRC 1267 / NRRL Y-1140 / WM37) (Yeast).